The following is a 260-amino-acid chain: Indole-3-glycerol phosphate synthase (260 aa).

The protein belongs to the TrpC family.

The enzyme catalyses 1-(2-carboxyphenylamino)-1-deoxy-D-ribulose 5-phosphate + H(+) = (1S,2R)-1-C-(indol-3-yl)glycerol 3-phosphate + CO2 + H2O. The protein operates within amino-acid biosynthesis; L-tryptophan biosynthesis; L-tryptophan from chorismate: step 4/5. The protein is Indole-3-glycerol phosphate synthase of Staphylococcus saprophyticus subsp. saprophyticus (strain ATCC 15305 / DSM 20229 / NCIMB 8711 / NCTC 7292 / S-41).